Reading from the N-terminus, the 262-residue chain is [LysW]-aminoadipate/[LysW]-glutamate kinase (262 aa).

Residues 35–36, R62, and N167 contribute to the substrate site; that span reads GG.

This sequence belongs to the acetylglutamate kinase family. LysZ subfamily.

The protein localises to the cytoplasm. It carries out the reaction [amino-group carrier protein]-C-terminal-N-(1,4-dicarboxybutan-1-yl)-L-glutamine + ATP = [amino-group carrier protein]-C-terminal-N-(1-carboxy-5-phosphooxy-5-oxopentan-1-yl)-L-glutamine + ADP. It catalyses the reaction [amino-group carrier protein]-C-terminal-gamma-(L-glutamyl)-L-glutamate + ATP = [amino-group carrier protein]-C-terminal-gamma-(5-phospho-L-glutamyl)-L-glutamate + ADP. It functions in the pathway amino-acid biosynthesis; L-lysine biosynthesis via AAA pathway; L-lysine from L-alpha-aminoadipate (Thermus route): step 2/5. Its pathway is amino-acid biosynthesis; L-arginine biosynthesis. In terms of biological role, involved in both the arginine and lysine biosynthetic pathways. Phosphorylates the LysW-bound precursors glutamate (for arginine biosynthesis), respectively alpha-aminoadipate (for lysine biosynthesis). This is [LysW]-aminoadipate/[LysW]-glutamate kinase from Metallosphaera sedula (strain ATCC 51363 / DSM 5348 / JCM 9185 / NBRC 15509 / TH2).